A 113-amino-acid polypeptide reads, in one-letter code: UPF0342 protein MGAS10750_Spy0713 (113 aa).

It belongs to the UPF0342 family.

In Streptococcus pyogenes serotype M4 (strain MGAS10750), this protein is UPF0342 protein MGAS10750_Spy0713.